A 239-amino-acid chain; its full sequence is Lipid transferase CIDEC (239 aa).

The tract at residues 1 to 35 (MDYAMKSLSLLYPRSLSRHVAVSTAVVTQQLVSKP) is required for liquid-liquid phase separation (LLPS). The CIDE-N domain occupies 41 to 118 (RARPCRVSTA…VLLKGQKWKP (78 aa)). The short motif at 123-126 (RKKR) is the RKKR polybasic motif element.

It belongs to the CIDE family. In terms of assembly, homodimer. Homooligomer; undergoes liquid-liquid phase separation (LLPS) via its N-terminus, facilitating lipid droplet fusion, occurs at the lipid droplet contact sites. Interacts with CIDEA. Interacts with PLIN1. Interacts with NFAT5; this interaction is direct and retains NFAT5 in the cytoplasm. Interacts with CEBPB. Interacts with isoform CLSTN3beta of CLSTN3; inhibiting the lipid transferase activity of CIDEC. In terms of processing, ubiquitinated and targeted to proteasomal degradation, resulting in a short half-life (about 15 minutes in 3T3-L1 cells). Protein stability depends on triaclyglycerol synthesis, fatty acid availability and lipid droplet formation. As to expression, expressed almost exclusively in adipose tissue, including subcutaneous and epididymal white adipose tissue (at protein level). Although abundantly present in brown adipose tissue at the mRNA level, the protein is almost undetectable in this tissue, or at moderate levels. Expressed in the mammary gland, in stromal adipose tissue, but becomes undetectable at the end of pregnancy and during lactation (at protein level). Expressed at low levels in skeletal muscle and heart.

It localises to the lipid droplet. It is found in the endoplasmic reticulum. The protein resides in the nucleus. It carries out the reaction a triacyl-sn-glycerol(in) = a triacyl-sn-glycerol(out). In terms of biological role, lipid transferase specifically expressed in white adipose tissue, which promotes unilocular lipid droplet formation by mediating lipid droplet fusion. Lipid droplet fusion promotes their enlargement, restricting lipolysis and favoring lipid storage. Localizes on the lipid droplet surface, at focal contact sites between lipid droplets, and mediates atypical lipid droplet fusion by undergoing liquid-liquid phase separation (LLPS) and promoting directional net neutral lipid transfer from the smaller to larger lipid droplets. The transfer direction may be driven by the internal pressure difference between the contacting lipid droplet pair. Its role in neutral lipid transfer and lipid droplet enlargement is activated by the interaction with PLIN1. May also act as a CEBPB coactivator in the white adipose tissue to control the expression of a subset of CEBPB downstream target genes, including SOCS1, SOCS3, TGFB1, TGFBR1, ID2 and XDH. When overexpressed in preadipocytes, induces apoptosis or increases cell susceptibility to apoptosis induced by serum deprivation or TGFB treatment. In Mus musculus (Mouse), this protein is Lipid transferase CIDEC.